Reading from the N-terminus, the 291-residue chain is tRNA dimethylallyltransferase (291 aa).

Residue Gly9–Ser16 participates in ATP binding. Thr11–Ser16 serves as a coordination point for substrate. Residues Asp34–Ala37 are interaction with substrate tRNA.

It belongs to the IPP transferase family. Monomer. It depends on Mg(2+) as a cofactor.

It catalyses the reaction adenosine(37) in tRNA + dimethylallyl diphosphate = N(6)-dimethylallyladenosine(37) in tRNA + diphosphate. Functionally, catalyzes the transfer of a dimethylallyl group onto the adenine at position 37 in tRNAs that read codons beginning with uridine, leading to the formation of N6-(dimethylallyl)adenosine (i(6)A). The protein is tRNA dimethylallyltransferase of Campylobacter concisus (strain 13826).